A 129-amino-acid chain; its full sequence is Class I hydrophobin 11 (129 aa).

Residues 1–19 (MRLTPLLAALALPLLTVLA) form the signal peptide. Intrachain disulfides connect C48/C106, C55/C100, C56/C89, and C107/C122.

The protein belongs to the fungal hydrophobin family. Self-assembles to form functional amyloid fibrils called rodlets. Self-assembly into fibrillar rodlets occurs spontaneously at hydrophobic:hydrophilic interfaces and the rodlets further associate laterally to form amphipathic monolayers.

The protein localises to the secreted. The protein resides in the cell wall. Aerial growth, conidiation, and dispersal of filamentous fungi in the environment rely upon a capability of their secreting small amphipathic proteins called hydrophobins (HPBs) with low sequence identity. Class I can self-assemble into an outermost layer of rodlet bundles on aerial cell surfaces, conferring cellular hydrophobicity that supports fungal growth, development and dispersal; whereas Class II form highly ordered films at water-air interfaces through intermolecular interactions but contribute nothing to the rodlet structure. The chain is Class I hydrophobin 11 from Pleurotus ostreatus (strain PC15) (Oyster mushroom).